A 480-amino-acid polypeptide reads, in one-letter code: Glycogen synthase 1 (480 aa).

Lys15 is a binding site for ADP-alpha-D-glucose.

Belongs to the glycosyltransferase 1 family. Bacterial/plant glycogen synthase subfamily.

The catalysed reaction is [(1-&gt;4)-alpha-D-glucosyl](n) + ADP-alpha-D-glucose = [(1-&gt;4)-alpha-D-glucosyl](n+1) + ADP + H(+). Its pathway is glycan biosynthesis; glycogen biosynthesis. Synthesizes alpha-1,4-glucan chains using ADP-glucose. This is Glycogen synthase 1 (glgA1) from Rhizobium meliloti (strain 1021) (Ensifer meliloti).